The following is a 357-amino-acid chain: Aminomethyltransferase (357 aa).

This sequence belongs to the GcvT family. The glycine cleavage system is composed of four proteins: P, T, L and H.

The enzyme catalyses N(6)-[(R)-S(8)-aminomethyldihydrolipoyl]-L-lysyl-[protein] + (6S)-5,6,7,8-tetrahydrofolate = N(6)-[(R)-dihydrolipoyl]-L-lysyl-[protein] + (6R)-5,10-methylene-5,6,7,8-tetrahydrofolate + NH4(+). In terms of biological role, the glycine cleavage system catalyzes the degradation of glycine. The polypeptide is Aminomethyltransferase (Deinococcus deserti (strain DSM 17065 / CIP 109153 / LMG 22923 / VCD115)).